Here is a 1083-residue protein sequence, read N- to C-terminus: Phospholipase D beta 1 (1083 aa).

Pro residues-rich tracts occupy residues 26-38, 46-66, and 132-148; these read RPPSSEPYPPPPT, YPYPPPPYATPPPYASPPPPH, and QYPPPETKPQEPLPPPQ. Residues 26–231 are disordered; it reads RPPSSEPYPP…PNSSFPSNSH (206 aa). 2 stretches are compositionally biased toward polar residues: residues 191–213 and 222–231; these read ISTNQPGPSVPQLSSLPSNSWQS and PNSSFPSNSH. One can recognise a C2 domain in the interval 252-393; it reads HSADMQMTLF…YSGAKIEGTY (142 aa). Asp-455 contacts Ca(2+). Residues 595–630 enclose the PLD phosphodiesterase 1 domain; that stretch reads TIYTHHQKNVIVDADAGGNRRKIIAFVGGLDLCDGR. Residues His-600, Lys-602, and Asp-607 contribute to the active site. Position 600 (His-600) interacts with a 1,2-diacyl-sn-glycero-3-phosphate. His-636 and His-668 together coordinate Ca(2+). A 1,2-diacyl-sn-glycero-3-phosphate contacts are provided by Gln-796 and His-934. The region spanning 929-956 is the PLD phosphodiesterase 2 domain; that stretch reads FMVYVHSKGMVVDDEYVVIGSANINQRS. Residues His-934, Lys-936, and Asp-941 contribute to the active site. Glu-997 contributes to the Ca(2+) binding site.

It belongs to the phospholipase D family. C2-PLD subfamily. Ca(2+) is required as a cofactor. As to expression, expressed in stems, and to a lower amount in leaves, flowers and siliques.

The protein localises to the cytoplasm. It is found in the membrane. It carries out the reaction a 1,2-diacyl-sn-glycero-3-phosphocholine + H2O = a 1,2-diacyl-sn-glycero-3-phosphate + choline + H(+). Inhibited by neomycin. Up-regulated by PIP2 binding. Functionally, hydrolyzes glycerol-phospholipids at the terminal phosphodiesteric bond to generate phosphatidic acids (PA). Plays an important role in various cellular processes, including phytohormone action, vesicular trafficking, secretion, cytoskeletal arrangement, meiosis, tumor promotion, pathogenesis, membrane deterioration and senescence. Involved in regulating stomatal movement and plant-water status. Can use phosphatidylserine (PS) and phosphatidylethanolamine (PE) as substrates only in the presence of PIP2. Can use phosphatidylcholine (PC), phosphatidylglycerol (PG) or N-acylphosphatidylethanolamine (NAPE) as substrates in the presence of PE and PIP2. Modulates defense responses to bacterial and fungal pathogens. The chain is Phospholipase D beta 1 from Arabidopsis thaliana (Mouse-ear cress).